The sequence spans 174 residues: Phospholipase A2-like protein Y52B11A.8 (174 aa).

Positions 1–18 (MRGLLVATWIFVSVAASA) are cleaved as a signal peptide. Residues N49 and N143 are each glycosylated (N-linked (GlcNAc...) asparagine). The tract at residues 137–174 (YEASGPNASTTEESPAEKDDYDYESHVAGLNATPSSST) is disordered.

This sequence belongs to the phospholipase A2 family.

It localises to the secreted. This is Phospholipase A2-like protein Y52B11A.8 from Caenorhabditis elegans.